The primary structure comprises 201 residues: Recombination protein RecR (201 aa).

Residues 59–74 form a C4-type zinc finger; sequence CSRCQNFCEAELCSIC. The region spanning 82–177 is the Toprim domain; the sequence is RVLCVVESPT…PVSRIAHGIP (96 aa).

This sequence belongs to the RecR family.

Functionally, may play a role in DNA repair. It seems to be involved in an RecBC-independent recombinational process of DNA repair. It may act with RecF and RecO. The chain is Recombination protein RecR from Hahella chejuensis (strain KCTC 2396).